The following is a 78-amino-acid chain: Small ribosomal subunit protein uS15 (78 aa).

Belongs to the universal ribosomal protein uS15 family. Part of the 30S ribosomal subunit. Forms a bridge to the 50S subunit in the 70S ribosome, contacting the 23S rRNA.

In terms of biological role, one of the primary rRNA binding proteins, it binds directly to 16S rRNA where it helps nucleate assembly of the platform of the 30S subunit by binding and bridging several RNA helices of the 16S rRNA. Forms an intersubunit bridge (bridge B4) with the 23S rRNA of the 50S subunit in the ribosome. This Karelsulcia muelleri (strain GWSS) (Sulcia muelleri) protein is Small ribosomal subunit protein uS15.